We begin with the raw amino-acid sequence, 361 residues long: Peptide chain release factor 1 (361 aa).

Residue Gln235 is modified to N5-methylglutamine.

It belongs to the prokaryotic/mitochondrial release factor family. Methylated by PrmC. Methylation increases the termination efficiency of RF1.

Its subcellular location is the cytoplasm. In terms of biological role, peptide chain release factor 1 directs the termination of translation in response to the peptide chain termination codons UAG and UAA. The sequence is that of Peptide chain release factor 1 from Rhodopseudomonas palustris (strain BisB18).